Consider the following 378-residue polypeptide: Phospho-N-acetylmuramoyl-pentapeptide-transferase (378 aa).

Helical transmembrane passes span 27–47, 74–94, 96–116, 135–155, 184–204, 216–236, 256–276, 280–300, 305–325, and 355–375; these read TAFASLTALFLCIALGPWLIN, TMGGVLIVISIVIPTLLWADL, YPYVWIALAGLLGYGWIGFLD, LVYQFIMGFAFAASLLVMRAY, WTYVIGVAPFCIFVALVVVFY, GLAIGLMVIAAGALTVLAYAG, LTIFCGSMTGASLGFLWYNAH, IFMGDVGSLGLGGAMAVVAVL, ILLLFIGGIFVLEAFSVILQV, and KIIARFWIAGLVLALFALTTL.

This sequence belongs to the glycosyltransferase 4 family. MraY subfamily. Mg(2+) is required as a cofactor.

The protein resides in the cell inner membrane. It catalyses the reaction UDP-N-acetyl-alpha-D-muramoyl-L-alanyl-gamma-D-glutamyl-meso-2,6-diaminopimeloyl-D-alanyl-D-alanine + di-trans,octa-cis-undecaprenyl phosphate = di-trans,octa-cis-undecaprenyl diphospho-N-acetyl-alpha-D-muramoyl-L-alanyl-D-glutamyl-meso-2,6-diaminopimeloyl-D-alanyl-D-alanine + UMP. The protein operates within cell wall biogenesis; peptidoglycan biosynthesis. In terms of biological role, catalyzes the initial step of the lipid cycle reactions in the biosynthesis of the cell wall peptidoglycan: transfers peptidoglycan precursor phospho-MurNAc-pentapeptide from UDP-MurNAc-pentapeptide onto the lipid carrier undecaprenyl phosphate, yielding undecaprenyl-pyrophosphoryl-MurNAc-pentapeptide, known as lipid I. In Solibacter usitatus (strain Ellin6076), this protein is Phospho-N-acetylmuramoyl-pentapeptide-transferase.